The following is a 151-amino-acid chain: UPF0208 membrane protein YfbV (151 aa).

The next 2 helical transmembrane spans lie at tyrosine 46 to leucine 65 and leucine 69 to glycine 91.

The protein belongs to the UPF0208 family.

It localises to the cell inner membrane. In Shigella boydii serotype 18 (strain CDC 3083-94 / BS512), this protein is UPF0208 membrane protein YfbV.